The sequence spans 2804 residues: Nipped-B-like protein (2804 aa).

2 stretches are compositionally biased toward polar residues: residues 128–173 (LSQN…QNSP) and 191–208 (HPSSYTTHPQMQQASVSS). The tract at residues 128–340 (LSQNSMHSSP…LGKDEKEQSE (213 aa)) is disordered. Phosphoserine occurs at positions 150 and 162. Over residues 234-249 (HHADNPRHGSSEDYLH) the composition is skewed to basic and acidic residues. Phosphoserine occurs at positions 243, 256, 274, 280, 284, 301, 306, and 318. The segment covering 331–340 (LGKDEKEQSE) has biased composition (basic and acidic residues). Residue Ser350 is modified to Phosphoserine. The segment covering 482-500 (RESAIERERFSKEVQDKDK) has biased composition (basic and acidic residues). The disordered stretch occupies residues 482-946 (RESAIERERF…NKAEFPSYLL (465 aa)). Over residues 523–534 (PASQETGSTGNG) the composition is skewed to polar residues. Composition is skewed to basic and acidic residues over residues 562-572 (DSIKKPEEIKQ), 593-663 (PENH…ECKQ), 672-685 (KQNENRLSDTKPND), and 694-939 (ETTK…DNKA). Phosphothreonine is present on residues Thr713 and Thr746. Ser912 is modified (phosphoserine). The short motif at 996-1009 (NKGAKPVVVLQKLS) is the PxVxL motif element. 2 disordered regions span residues 1017 to 1047 (IKDREDKSRSSLKPIKNKPSKSNKGSIDQSV) and 1060 to 1191 (ESTM…LTPE). Lys1082 bears the N6-acetyllysine mark. Phosphoserine is present on residues Ser1089, Ser1090, and Ser1096. A compositionally biased stretch (acidic residues) spans 1089–1100 (SSDEDNDSDEAF). Residues 1109-1139 (KDDDKAWEYEERDRRSSGDHRRSGHSHEGRR) are compositionally biased toward basic and acidic residues. Ser1150, Ser1152, and Ser1154 each carry phosphoserine. Tyr1159 carries the post-translational modification Phosphotyrosine. Ser1160 carries the phosphoserine modification. Over residues 1171–1182 (KMKKKEKQKKRK) the composition is skewed to basic residues. Thr1189 carries the post-translational modification Phosphothreonine. Phosphoserine is present on Ser1197. The tract at residues 1691–1710 (AMKSQKDEESSEGTHHAKEI) is disordered. HEAT repeat units follow at residues 1767 to 1805 (AQSFDIYLTQILRVLGENAIAVRTKAMKCLSEVVAVDPS), 1843 to 1881 (PQLAEQYYDMLIERILDTGISVRKRVIKILRDICIEQPT), 1945 to 1984 (YDWFEQLLQNLLKSEEDSSYKPVKKACTQLVDNLVEHILK), 2227 to 2267 (VNLK…LKEM), and 2313 to 2351 (LIHPVQCVPYLIAMGTDPEPAMRNKADQQLVEIDKKYAG). Residues 2473–2489 (VKDKRKERKSSPSKENE) show a composition bias toward basic and acidic residues. 2 disordered regions span residues 2473–2520 (VKDK…DDIN) and 2651–2696 (TSLL…DSTE). A phosphoserine mark is found at Ser2493, Ser2509, Ser2511, Ser2513, Ser2515, Ser2652, and Ser2658. Acidic residues predominate over residues 2510-2519 (DSDSDSEDDI). Position 2667 is a phosphothreonine (Thr2667). Phosphoserine is present on Ser2672.

It belongs to the SCC2/Nipped-B family. In terms of assembly, heterodimerizes with MAU2/SCC4 to form the cohesin loading complex. The NIPBL-MAU2 heterodimer interacts with the cohesin complex composed of SMC1A/B and SMC3 heterodimer, RAD21 and STAG1/SA1. NIPBL directly contacts all members of the complex, RAD21, SMC1A/B, SMC3 and STAG1. Interacts directly (via PxVxL motif) with CBX5. Interacts with ZNF609 (via N-terminus). Interacts with the multiprotein complex Integrator. Interacts (via PxVxL motif) with CBX3. Interacts with BRD4. Widely expressed. Highly expressed in heart, skeletal muscle, fetal and adult liver, fetal and adult kidney. Expressed at intermediates level in thymus, placenta, peripheral leukocyte and small intestine. Weakly or not expressed in brain, colon, spleen and lung.

Its subcellular location is the nucleus. The protein localises to the chromosome. In terms of biological role, plays an important role in the loading of the cohesin complex on to DNA. Forms a heterodimeric complex (also known as cohesin loading complex) with MAU2/SCC4 which mediates the loading of the cohesin complex onto chromatin. Plays a role in cohesin loading at sites of DNA damage. Its recruitment to double-strand breaks (DSBs) sites occurs in a CBX3-, RNF8- and RNF168-dependent manner whereas its recruitment to UV irradiation-induced DNA damage sites occurs in a ATM-, ATR-, RNF8- and RNF168-dependent manner. Along with ZNF609, promotes cortical neuron migration during brain development by regulating the transcription of crucial genes in this process. Preferentially binds promoters containing paused RNA polymerase II. Up-regulates the expression of SEMA3A, NRP1, PLXND1 and GABBR2 genes, among others. This chain is Nipped-B-like protein (NIPBL), found in Homo sapiens (Human).